We begin with the raw amino-acid sequence, 204 residues long: Large ribosomal subunit protein eL15A (204 aa).

Residues 164-185 are disordered; sequence LTATGKKSRGINKGHKFNNTKA. Residues 169-185 show a composition bias toward basic residues; the sequence is KKSRGINKGHKFNNTKA.

The protein belongs to the eukaryotic ribosomal protein eL15 family. In terms of assembly, component of the large ribosomal subunit (LSU). Mature yeast ribosomes consist of a small (40S) and a large (60S) subunit. The 40S small subunit contains 1 molecule of ribosomal RNA (18S rRNA) and 33 different proteins (encoded by 57 genes). The large 60S subunit contains 3 rRNA molecules (25S, 5.8S and 5S rRNA) and 46 different proteins (encoded by 81 genes).

It localises to the cytoplasm. Functionally, component of the ribosome, a large ribonucleoprotein complex responsible for the synthesis of proteins in the cell. The small ribosomal subunit (SSU) binds messenger RNAs (mRNAs) and translates the encoded message by selecting cognate aminoacyl-transfer RNA (tRNA) molecules. The large subunit (LSU) contains the ribosomal catalytic site termed the peptidyl transferase center (PTC), which catalyzes the formation of peptide bonds, thereby polymerizing the amino acids delivered by tRNAs into a polypeptide chain. The nascent polypeptides leave the ribosome through a tunnel in the LSU and interact with protein factors that function in enzymatic processing, targeting, and the membrane insertion of nascent chains at the exit of the ribosomal tunnel. This is Large ribosomal subunit protein eL15A from Saccharomyces cerevisiae (strain ATCC 204508 / S288c) (Baker's yeast).